A 178-amino-acid chain; its full sequence is FXYD domain-containing ion transport regulator 5 (178 aa).

The signal sequence occupies residues 1 to 21 (MSPSGRLCLLTIVGLILPTRG). Residues 22–145 (QTLKDTTSSS…FYDEHTLRKR (124 aa)) are Extracellular-facing. The interval 23 to 131 (TLKDTTSSSS…QTLKPSGFHE (109 aa)) is disordered. Composition is skewed to low complexity over residues 26–36 (DTTSSSSADST) and 68–77 (TPQPQTQTQQ). The span at 103–125 (DTTTLSERPSPSTDVQTDPQTLK) shows a compositional bias: polar residues. A helical membrane pass occupies residues 146-164 (GLLVAAVLFITGIIILTSG). Over 165-178 (KCRQLSRLCRNRCR) the chain is Cytoplasmic.

Belongs to the FXYD family. In terms of assembly, regulatory subunit of the sodium/potassium-transporting ATPase which is composed of a catalytic alpha subunit, a non-catalytic beta subunit and an additional regulatory subunit. The regulatory subunit, a member of the FXYD protein family, modulates the enzymatic activity in a tissue- and isoform-specific way by changing affinities of the Na+/K+-ATPase toward Na(+), K(+) or ATP. In terms of processing, glycosylated.

Its subcellular location is the cell membrane. It is found in the basolateral cell membrane. Functionally, associates with and regulates the activity of the sodium/potassium-transporting ATPase (NKA) which catalyzes the hydrolysis of ATP coupled with the exchange of Na(+) and K(+) ions across the plasma membrane. May increase NKA activity by increasing the apparent affinity for Na(+). Involved in down-regulation of E-cadherin which results in reduced cell adhesion. Promotes metastasis. This is FXYD domain-containing ion transport regulator 5 (FXYD5) from Homo sapiens (Human).